The sequence spans 396 residues: Protein BOP3 (396 aa).

6 disordered regions span residues 1–22 (MSTF…NNVN), 98–126 (GVPA…ENLP), 145–168 (PTPM…GISH), 203–239 (VARR…KFTN), 254–274 (RDQQ…QQDL), and 355–396 (REGR…LNST). Composition is skewed to polar residues over residues 111–124 (QPHN…SSEN), 159–168 (ASSSTGGISH), and 210–230 (GTKS…SRNL). The span at 355 to 369 (REGRQVHDDLDDRTC) shows a compositional bias: basic and acidic residues. The span at 370-396 (SESSSRNESPVRTITKDNSVGKILNST) shows a compositional bias: polar residues.

The protein localises to the cytoplasm. It is found in the nucleus. Its function is as follows. Involved in resistance to methylmercury. Overexpression suppresses a PAM1-SLV3 double null mutation. This is Protein BOP3 (BOP3) from Saccharomyces cerevisiae (strain ATCC 204508 / S288c) (Baker's yeast).